The chain runs to 60 residues: Metallothionein A (60 aa).

Residues M1–C28 are beta. 20 residues coordinate a divalent metal cation: C4, C6, C12, C14, C18, C20, C23, C25, C28, C32, C33, C35, C36, C40, C43, C47, C49, C54, C58, and C59. The alpha stretch occupies residues K29–Q60.

It belongs to the metallothionein superfamily. Type 1 family.

In terms of biological role, metallothioneins have a high content of cysteine residues that bind various heavy metals. The polypeptide is Metallothionein A (mta) (Chaenocephalus aceratus (Blackfin icefish)).